A 298-amino-acid polypeptide reads, in one-letter code: Tyrosine recombinase XerD (298 aa).

One can recognise a Core-binding (CB) domain in the interval 2 to 87; that stretch reads KQELARIEQF…AVRRLFQYLY (86 aa). In terms of domain architecture, Tyr recombinase spans 108–292; the sequence is RLPKDLSEAQ…ATERLRQLHQ (185 aa). Active-site residues include Arg148, Lys172, His244, Arg247, and His270. The active-site O-(3'-phospho-DNA)-tyrosine intermediate is the Tyr279.

This sequence belongs to the 'phage' integrase family. XerD subfamily. Forms a cyclic heterotetrameric complex composed of two molecules of XerC and two molecules of XerD, in which XerC interacts with XerD via its C-terminal region, XerD interacts with XerC via its C-terminal region and so on.

The protein resides in the cytoplasm. FtsK may regulate the catalytic switch between XerC and XerD in the heterotetrameric complex during the two steps of the recombination process. Its function is as follows. Site-specific tyrosine recombinase, which acts by catalyzing the cutting and rejoining of the recombining DNA molecules. Binds cooperatively to specific DNA consensus sequences that are separated from XerC binding sites by a short central region, forming the heterotetrameric XerC-XerD complex that recombines DNA substrates. The complex is essential to convert dimers of the bacterial chromosome into monomers to permit their segregation at cell division. It also contributes to the segregational stability of plasmids. In the complex XerD specifically exchanges the bottom DNA strands. In Shigella flexneri, this protein is Tyrosine recombinase XerD.